We begin with the raw amino-acid sequence, 477 residues long: Probable malate:quinone oxidoreductase (477 aa).

It belongs to the MQO family. FAD serves as cofactor.

It carries out the reaction (S)-malate + a quinone = a quinol + oxaloacetate. It functions in the pathway carbohydrate metabolism; tricarboxylic acid cycle; oxaloacetate from (S)-malate (quinone route): step 1/1. In Synechococcus sp. (strain RCC307), this protein is Probable malate:quinone oxidoreductase.